Consider the following 556-residue polypeptide: 2-succinyl-5-enolpyruvyl-6-hydroxy-3-cyclohexene-1-carboxylate synthase (556 aa).

This sequence belongs to the TPP enzyme family. MenD subfamily. Homodimer. Mg(2+) serves as cofactor. It depends on Mn(2+) as a cofactor. Thiamine diphosphate is required as a cofactor.

It catalyses the reaction isochorismate + 2-oxoglutarate + H(+) = 5-enolpyruvoyl-6-hydroxy-2-succinyl-cyclohex-3-ene-1-carboxylate + CO2. Its pathway is quinol/quinone metabolism; 1,4-dihydroxy-2-naphthoate biosynthesis; 1,4-dihydroxy-2-naphthoate from chorismate: step 2/7. It functions in the pathway quinol/quinone metabolism; menaquinone biosynthesis. In terms of biological role, catalyzes the thiamine diphosphate-dependent decarboxylation of 2-oxoglutarate and the subsequent addition of the resulting succinic semialdehyde-thiamine pyrophosphate anion to isochorismate to yield 2-succinyl-5-enolpyruvyl-6-hydroxy-3-cyclohexene-1-carboxylate (SEPHCHC). The sequence is that of 2-succinyl-5-enolpyruvyl-6-hydroxy-3-cyclohexene-1-carboxylate synthase from Mycobacterium leprae (strain Br4923).